The chain runs to 169 residues: Cell division inhibitor SulA (169 aa).

Residues 106 to 112 (ALRTGNY) are ftsZ binding. A lon protease binding region spans residues 162–169 (KIHSNLYH).

This sequence belongs to the SulA family. In terms of assembly, interacts with FtsZ. In terms of processing, is rapidly cleaved and degraded by the Lon protease once DNA damage is repaired.

Component of the SOS system and an inhibitor of cell division. Accumulation of SulA causes rapid cessation of cell division and the appearance of long, non-septate filaments. In the presence of GTP, binds a polymerization-competent form of FtsZ in a 1:1 ratio, thus inhibiting FtsZ polymerization and therefore preventing it from participating in the assembly of the Z ring. This mechanism prevents the premature segregation of damaged DNA to daughter cells during cell division. The chain is Cell division inhibitor SulA from Escherichia fergusonii (strain ATCC 35469 / DSM 13698 / CCUG 18766 / IAM 14443 / JCM 21226 / LMG 7866 / NBRC 102419 / NCTC 12128 / CDC 0568-73).